Consider the following 236-residue polypeptide: Potassium/proton antiporter CemA (236 aa).

The next 4 membrane-spanning stretches (helical) occupy residues 12–32 (TVTSIKYFISFILFVLITNHV), 114–134 (IANVFADLLSLCIFVLALLLG), 161–181 (IILFTDIFVGFHSSHGWEILI), and 196–216 (FIFLFVATFPVVLDTVFKYWI).

Belongs to the CemA family.

It localises to the plastid. It is found in the chloroplast inner membrane. It carries out the reaction K(+)(in) + H(+)(out) = K(+)(out) + H(+)(in). In terms of biological role, contributes to K(+)/H(+) antiport activity by supporting proton efflux to control proton extrusion and homeostasis in chloroplasts in a light-dependent manner to modulate photosynthesis. Prevents excessive induction of non-photochemical quenching (NPQ) under continuous-light conditions. Indirectly promotes efficient inorganic carbon uptake into chloroplasts. This Chlorokybus atmophyticus (Soil alga) protein is Potassium/proton antiporter CemA.